We begin with the raw amino-acid sequence, 284 residues long: Bifunctional protein FolD (284 aa).

Residues 164–166 (GRS) and serine 189 each bind NADP(+).

Belongs to the tetrahydrofolate dehydrogenase/cyclohydrolase family. In terms of assembly, homodimer.

It catalyses the reaction (6R)-5,10-methylene-5,6,7,8-tetrahydrofolate + NADP(+) = (6R)-5,10-methenyltetrahydrofolate + NADPH. The catalysed reaction is (6R)-5,10-methenyltetrahydrofolate + H2O = (6R)-10-formyltetrahydrofolate + H(+). The protein operates within one-carbon metabolism; tetrahydrofolate interconversion. Its function is as follows. Catalyzes the oxidation of 5,10-methylenetetrahydrofolate to 5,10-methenyltetrahydrofolate and then the hydrolysis of 5,10-methenyltetrahydrofolate to 10-formyltetrahydrofolate. The polypeptide is Bifunctional protein FolD (Listeria welshimeri serovar 6b (strain ATCC 35897 / DSM 20650 / CCUG 15529 / CIP 8149 / NCTC 11857 / SLCC 5334 / V8)).